A 122-amino-acid chain; its full sequence is Ribosome-binding factor A (122 aa).

Belongs to the RbfA family. In terms of assembly, monomer. Binds 30S ribosomal subunits, but not 50S ribosomal subunits or 70S ribosomes.

It localises to the cytoplasm. Functionally, one of several proteins that assist in the late maturation steps of the functional core of the 30S ribosomal subunit. Associates with free 30S ribosomal subunits (but not with 30S subunits that are part of 70S ribosomes or polysomes). Required for efficient processing of 16S rRNA. May interact with the 5'-terminal helix region of 16S rRNA. This chain is Ribosome-binding factor A, found in Cupriavidus pinatubonensis (strain JMP 134 / LMG 1197) (Cupriavidus necator (strain JMP 134)).